The sequence spans 210 residues: Na(+)-translocating NADH-quinone reductase subunit D (210 aa).

Helical transmembrane passes span 14 to 34 (PIVNNNPIALQILGVCSALAV), 42 to 62 (LVMALALTAVTAFSNLFISLI), 72 to 92 (IIVQMTIIASLVIVVDQLLQA), 103 to 123 (VFVGLIITNCIVMGRAEAYAM), 131 to 151 (FMDGIGNGLGYGVILLAVGFV), and 178 to 198 (NGMLLLPPSAFFLIGILIWII).

Belongs to the NqrDE/RnfAE family. In terms of assembly, composed of six subunits; NqrA, NqrB, NqrC, NqrD, NqrE and NqrF.

The protein resides in the cell inner membrane. It carries out the reaction a ubiquinone + n Na(+)(in) + NADH + H(+) = a ubiquinol + n Na(+)(out) + NAD(+). In terms of biological role, NQR complex catalyzes the reduction of ubiquinone-1 to ubiquinol by two successive reactions, coupled with the transport of Na(+) ions from the cytoplasm to the periplasm. NqrA to NqrE are probably involved in the second step, the conversion of ubisemiquinone to ubiquinol. This chain is Na(+)-translocating NADH-quinone reductase subunit D, found in Shewanella putrefaciens (strain CN-32 / ATCC BAA-453).